We begin with the raw amino-acid sequence, 526 residues long: Phosphoenolpyruvate carboxykinase (ATP) 2 (526 aa).

The substrate site is built by Arg-55, Tyr-190, and Lys-196. ATP is bound by residues Lys-196, His-215, and Gly-231–Thr-239. The Mn(2+) site is built by Lys-196 and His-215. Asp-252 is a Mn(2+) binding site. ATP contacts are provided by Glu-280, Arg-317, and Thr-442. Position 317 (Arg-317) interacts with substrate.

The protein belongs to the phosphoenolpyruvate carboxykinase (ATP) family. It depends on Mn(2+) as a cofactor.

Its subcellular location is the cytoplasm. It carries out the reaction oxaloacetate + ATP = phosphoenolpyruvate + ADP + CO2. The protein operates within carbohydrate biosynthesis; gluconeogenesis. Functionally, involved in the gluconeogenesis. Catalyzes the conversion of oxaloacetate (OAA) to phosphoenolpyruvate (PEP) through direct phosphoryl transfer between the nucleoside triphosphate and OAA. In Moorella thermoacetica (strain ATCC 39073 / JCM 9320), this protein is Phosphoenolpyruvate carboxykinase (ATP) 2.